The following is a 476-amino-acid chain: Glycogen synthase (476 aa).

Lys-15 contributes to the ADP-alpha-D-glucose binding site.

It belongs to the glycosyltransferase 1 family. Bacterial/plant glycogen synthase subfamily.

It catalyses the reaction [(1-&gt;4)-alpha-D-glucosyl](n) + ADP-alpha-D-glucose = [(1-&gt;4)-alpha-D-glucosyl](n+1) + ADP + H(+). It functions in the pathway glycan biosynthesis; glycogen biosynthesis. In terms of biological role, synthesizes alpha-1,4-glucan chains using ADP-glucose. In Bacillus cereus (strain ATCC 10987 / NRS 248), this protein is Glycogen synthase.